Consider the following 61-residue polypeptide: uncharacterized protein (61 aa).

The tract at residues 1 to 40 (MRRGGEPQCDGREFRIASSPAREREDDNETAPPQTSAAQE) is disordered. Residues 9 to 25 (CDGREFRIASSPARERE) are compositionally biased toward basic and acidic residues.

This is an uncharacterized protein from Caenorhabditis elegans.